We begin with the raw amino-acid sequence, 857 residues long: DNA mismatch repair protein MutS (857 aa).

ATP is bound at residue 608 to 615 (GPNMSGKS).

This sequence belongs to the DNA mismatch repair MutS family.

This protein is involved in the repair of mismatches in DNA. It is possible that it carries out the mismatch recognition step. This protein has a weak ATPase activity. This chain is DNA mismatch repair protein MutS, found in Lacticaseibacillus paracasei (strain ATCC 334 / BCRC 17002 / CCUG 31169 / CIP 107868 / KCTC 3260 / NRRL B-441) (Lactobacillus paracasei).